The sequence spans 162 residues: Cyanate hydratase (162 aa).

Active-site residues include Arg103, Glu106, and Ser129.

Belongs to the cyanase family.

The catalysed reaction is cyanate + hydrogencarbonate + 3 H(+) = NH4(+) + 2 CO2. Catalyzes the reaction of cyanate with bicarbonate to produce ammonia and carbon dioxide. In Pyrenophora tritici-repentis (strain Pt-1C-BFP) (Wheat tan spot fungus), this protein is Cyanate hydratase.